The sequence spans 337 residues: Tetraacyldisaccharide 4'-kinase (337 aa).

55-62 (TAGGNGKT) contributes to the ATP binding site.

The protein belongs to the LpxK family.

It carries out the reaction a lipid A disaccharide + ATP = a lipid IVA + ADP + H(+). It participates in glycolipid biosynthesis; lipid IV(A) biosynthesis; lipid IV(A) from (3R)-3-hydroxytetradecanoyl-[acyl-carrier-protein] and UDP-N-acetyl-alpha-D-glucosamine: step 6/6. Its function is as follows. Transfers the gamma-phosphate of ATP to the 4'-position of a tetraacyldisaccharide 1-phosphate intermediate (termed DS-1-P) to form tetraacyldisaccharide 1,4'-bis-phosphate (lipid IVA). The polypeptide is Tetraacyldisaccharide 4'-kinase (Sodalis glossinidius (strain morsitans)).